The sequence spans 766 residues: Pentatricopeptide repeat-containing protein At3g61520, mitochondrial (766 aa).

The transit peptide at 1–30 (MSIMLSISRRRNSYILLNHSRFLRRFSYDV) directs the protein to the mitochondrion. PPR repeat units follow at residues 151–181 (TVVA…LDSN), 184–218 (NSQV…ESVF), 221–257 (NRIT…GVSP), 258–292 (NSVW…KTPL), 293–327 (EAPP…KIRP), 328–358 (DVVT…MRGK), 369–404 (DSIH…RCAP), 405–439 (NAVT…EIKP), 440–474 (NVVT…GVKG), 475–509 (NVVT…GCSP), 510–544 (DAKI…GFSL), 545–579 (DLLA…GKKP), 580–614 (DSIT…GLDP), 615–650 (TVTT…KVNP), 651–685 (NTVI…MVRP), and 686–720 (NVET…SCEP).

It belongs to the PPR family. P subfamily.

It is found in the mitochondrion. The chain is Pentatricopeptide repeat-containing protein At3g61520, mitochondrial from Arabidopsis thaliana (Mouse-ear cress).